Consider the following 460-residue polypeptide: Transcription factor TGA10 (460 aa).

Residues 1 to 11 (MQGHHQNHHQH) show a composition bias toward basic residues. Disordered stretches follow at residues 1–29 (MQGH…NKDG) and 43–163 (LDGQ…PKTL). The span at 12–21 (LSSSSATSSH) shows a compositional bias: low complexity. Composition is skewed to polar residues over residues 65-81 (TQNL…NIFP) and 121-136 (DLTN…QGSK). Over residues 138–162 (IKKEGNRKGLASSDHDIPKSSDPKT) the composition is skewed to basic and acidic residues. Residues 159–203 (DPKTLRRLAQNREAARKSRLRKKAYVQQLESCRIKLTQLEQEIQR) form the bZIP domain. A basic motif region spans residues 161-181 (KTLRRLAQNREAARKSRLRKK). The Nuclear localization signal motif lies at 163 to 170 (LRRLAQNR). The segment at 187–201 (LESCRIKLTQLEQEI) is leucine-zipper. A DOG1 domain is found at 236-455 (AAVFDMEYAR…QALSSLWLAR (220 aa)).

Belongs to the bZIP family. As to quaternary structure, homodimer. Binds DNA as a dimer. Interacts with floral glutaredoxins GRXC7/ROXY1 and GRXC8/ROXY2 in the nucleus. Interacts with TGA1, TGA2, TGA3, TGA4, TGA5, TGA6, TGA7, TGA9 and PAN. As to expression, expressed at low levels in inflorescence apex and flowers.

It localises to the nucleus. In terms of biological role, together with TGA9, basic leucine-zipper transcription factor required for anther development, probably via the activation of SPL expression in anthers and via the regulation of genes with functions in early and middle tapetal development. Required for signaling responses to pathogen-associated molecular patterns (PAMPs) such as flg22 that involves chloroplastic reactive oxygen species (ROS) production and subsequent expression of H(2)O(2)-responsive genes. This is Transcription factor TGA10 from Arabidopsis thaliana (Mouse-ear cress).